The following is a 236-amino-acid chain: Class B acid phosphatase (236 aa).

An N-terminal signal peptide occupies residues 1 to 22 (MNHTLRSITLVLACVASLSANA). The Nucleophile role is filled by Asp70. Mg(2+) is bound by residues Asp70 and Asp72. Residue Asp72 is the Proton donor of the active site. Substrate-binding positions include 138 to 139 (TG) and Lys176. Residue Asp191 participates in Mg(2+) binding.

Belongs to the class B bacterial acid phosphatase family. In terms of assembly, homotetramer. Mg(2+) is required as a cofactor.

Its subcellular location is the periplasm. It carries out the reaction a phosphate monoester + H2O = an alcohol + phosphate. Dephosphorylates several organic phosphate monoesters. Also has a phosphotransferase activity catalyzing the transfer of low-energy phosphate groups from organic phosphate monoesters to free hydroxyl groups of various organic compounds. This is Class B acid phosphatase from Marinomonas sp. (strain MWYL1).